The following is a 235-amino-acid chain: Lipoprotein-releasing system ATP-binding protein LolD (235 aa).

Residues Leu-13–Ile-235 form the ABC transporter domain. Gly-49–Ser-56 serves as a coordination point for ATP.

Belongs to the ABC transporter superfamily. Lipoprotein translocase (TC 3.A.1.125) family. In terms of assembly, the complex is composed of two ATP-binding proteins (LolD) and two transmembrane proteins (LolC and LolE).

It is found in the cell inner membrane. In terms of biological role, part of the ABC transporter complex LolCDE involved in the translocation of mature outer membrane-directed lipoproteins, from the inner membrane to the periplasmic chaperone, LolA. Responsible for the formation of the LolA-lipoprotein complex in an ATP-dependent manner. The chain is Lipoprotein-releasing system ATP-binding protein LolD from Blochmanniella floridana.